We begin with the raw amino-acid sequence, 147 residues long: Peptide methionine sulfoxide reductase MsrA (147 aa).

Residue Cys10 is part of the active site.

It belongs to the MsrA Met sulfoxide reductase family.

The enzyme catalyses L-methionyl-[protein] + [thioredoxin]-disulfide + H2O = L-methionyl-(S)-S-oxide-[protein] + [thioredoxin]-dithiol. It catalyses the reaction [thioredoxin]-disulfide + L-methionine + H2O = L-methionine (S)-S-oxide + [thioredoxin]-dithiol. In terms of biological role, has an important function as a repair enzyme for proteins that have been inactivated by oxidation. Catalyzes the reversible oxidation-reduction of methionine sulfoxide in proteins to methionine. The polypeptide is Peptide methionine sulfoxide reductase MsrA (Pelagibacter ubique (strain HTCC1062)).